Reading from the N-terminus, the 120-residue chain is Flagellar protein FliT (120 aa).

A required for homodimerization region spans residues 1-50 (MERHQHLLSEYQQILTLSEQMLMLATVENWDALVDLEMAYLKAVENTANI). The tract at residues 60–98 (LQELLRQKLRSILENEIEIKRLLQRRLDKLSELVGQSTR) is fliD binding.

The protein belongs to the FliT family. In terms of assembly, homodimer. Interacts with FliD and FlhC.

The protein resides in the cytoplasm. It is found in the cytosol. Its function is as follows. Dual-function protein that regulates the transcription of class 2 flagellar operons and that also acts as an export chaperone for the filament-capping protein FliD. As a transcriptional regulator, acts as an anti-FlhDC factor; it directly binds FlhC, thus inhibiting the binding of the FlhC/FlhD complex to class 2 promoters, resulting in decreased expression of class 2 flagellar operons. As a chaperone, effects FliD transition to the membrane by preventing its premature polymerization, and by directing it to the export apparatus. This is Flagellar protein FliT from Yersinia pseudotuberculosis serotype IB (strain PB1/+).